The following is a 217-amino-acid chain: MGQKVHPIGMRVGIIRDWDAKWYAEKEYADYLHEDLAIRKFIQKELADAAVSTIEIERAVNKVNVSLHTAKPGMVIGKGGANVDALRAQLNKLTGKQVHINIVEIKSPDLDAHLVGENIARQLEQRVAFRRAQKQAIQRTMRAGAKGIKTQVSGRLNGADIARSEGYSEGTVPLHTLRADIDYAWEEADTTYGKLGVKVWIYRGEILPARKNTKGGK.

The KH type-2 domain maps to 29–97; sequence ADYLHEDLAI…AQLNKLTGKQ (69 aa).

It belongs to the universal ribosomal protein uS3 family. As to quaternary structure, part of the 30S ribosomal subunit. Forms a tight complex with proteins S10 and S14.

Its function is as follows. Binds the lower part of the 30S subunit head. Binds mRNA in the 70S ribosome, positioning it for translation. The protein is Small ribosomal subunit protein uS3 of Streptococcus mutans serotype c (strain ATCC 700610 / UA159).